Reading from the N-terminus, the 617-residue chain is Protein fem-1 homolog C (617 aa).

Methionine 1 carries the post-translational modification N-acetylmethionine. ANK repeat units lie at residues 2 to 31, 40 to 70, 82 to 111, 115 to 144, 148 to 177, 181 to 210, and 213 to 242; these read DLKT…KEEV, NGAT…SIEV, EGAP…SVNN, TNST…DLEV, HGHT…DVNR, KGNT…KMEK, and YGMT…TSKT. TPR repeat units follow at residues 245–279 and 338–371; these read INAL…RYSD and SYYI…QQNN. 2 ANK repeats span residues 481 to 523 and 527 to 556; these read NNFS…DVNV and DDNS…HFDA.

This sequence belongs to the fem-1 family. Component of a CRL2 E3 ubiquitin-protein ligase complex, also named ECS (Elongin BC-CUL2/5-SOCS-box protein) complex, composed of CUL2, Elongin BC (ELOB and ELOC), RBX1 and substrate-specific adapter FEM1C.

The protein operates within protein modification; protein ubiquitination. Functionally, substrate-recognition component of a Cul2-RING (CRL2) E3 ubiquitin-protein ligase complex of the DesCEND (destruction via C-end degrons) pathway, which recognizes a C-degron located at the extreme C terminus of target proteins, leading to their ubiquitination and degradation. The C-degron recognized by the DesCEND pathway is usually a motif of less than ten residues and can be present in full-length proteins, truncated proteins or proteolytically cleaved forms. The CRL2(FEM1C) complex specifically recognizes proteins with an arginine at the C-terminus: recognizes and binds proteins ending with -Lys/Arg-Xaa-Arg and -Lys/Arg-Xaa-Xaa-Arg C-degrons, such as SIL1 or OR51B2, leading to their ubiquitination and degradation. The CRL2(FEM1C) complex mediates ubiquitination and degradation of truncated MSRB1/SEPX1 selenoproteins produced by failed UGA/Sec decoding. In Bos taurus (Bovine), this protein is Protein fem-1 homolog C.